Here is a 208-residue protein sequence, read N- to C-terminus: Cytochrome c biogenesis ATP-binding export protein CcmA (208 aa).

Positions 3–206 (LSGKDLAAHR…LEKFVPSQER (204 aa)) constitute an ABC transporter domain. 35–42 (GPNGIGKS) contributes to the ATP binding site.

It belongs to the ABC transporter superfamily. CcmA exporter (TC 3.A.1.107) family. The complex is composed of two ATP-binding proteins (CcmA) and two transmembrane proteins (CcmB).

It is found in the cell inner membrane. The catalysed reaction is heme b(in) + ATP + H2O = heme b(out) + ADP + phosphate + H(+). Its function is as follows. Part of the ABC transporter complex CcmAB involved in the biogenesis of c-type cytochromes; once thought to export heme, this seems not to be the case, but its exact role is uncertain. Responsible for energy coupling to the transport system. The protein is Cytochrome c biogenesis ATP-binding export protein CcmA of Bartonella quintana (strain Toulouse) (Rochalimaea quintana).